Consider the following 242-residue polypeptide: Small ribosomal subunit protein uS3 (242 aa).

The 71-residue stretch at 39 to 109 folds into the KH type-2 domain; the sequence is IRQYVKATLA…QIRINVVEVT (71 aa). The disordered stretch occupies residues 220–242; that stretch reads KVNQPKRRQQKRRQQYDDRSNEG. Residues 223-232 show a composition bias toward basic residues; sequence QPKRRQQKRR. The segment covering 233–242 has biased composition (basic and acidic residues); it reads QQYDDRSNEG.

Belongs to the universal ribosomal protein uS3 family. Part of the 30S ribosomal subunit. Forms a tight complex with proteins S10 and S14.

Its function is as follows. Binds the lower part of the 30S subunit head. Binds mRNA in the 70S ribosome, positioning it for translation. This is Small ribosomal subunit protein uS3 from Trichodesmium erythraeum (strain IMS101).